The chain runs to 218 residues: N-alpha-acetyltransferase 11 (218 aa).

Residues 1-58 form an interaction with NAA15 region; that stretch reads MNIRNARPDDLMNMQHCNLLCLPENYQMKYYFYHGLSWPQLSYIAEDEDGKIVGYVLA. One can recognise an N-acetyltransferase domain in the interval 1 to 152; that stretch reads MNIRNARPDD…DAYAMKRDLS (152 aa). A disordered region spans residues 175–218; sequence EETQGGTLPDAGEACLPKNPTSKDSGSSDSTDVQDSSEDLDSIS. A compositionally biased stretch (low complexity) spans 196–205; the sequence is SKDSGSSDST. The segment covering 209–218 has biased composition (acidic residues); it reads DSSEDLDSIS.

The protein belongs to the acetyltransferase family. ARD1 subfamily. In terms of assembly, component of the N-terminal acetyltransferase A (NatA) complex composed of NAA11 and NAA15. Interacts with HIF1A.

The protein resides in the cytoplasm. Its subcellular location is the nucleus. It carries out the reaction N-terminal glycyl-[protein] + acetyl-CoA = N-terminal N(alpha)-acetylglycyl-[protein] + CoA + H(+). It catalyses the reaction N-terminal L-alanyl-[protein] + acetyl-CoA = N-terminal N(alpha)-acetyl-L-alanyl-[protein] + CoA + H(+). The catalysed reaction is N-terminal L-seryl-[protein] + acetyl-CoA = N-terminal N(alpha)-acetyl-L-seryl-[protein] + CoA + H(+). The enzyme catalyses N-terminal L-valyl-[protein] + acetyl-CoA = N-terminal N(alpha)-acetyl-L-valyl-[protein] + CoA + H(+). It carries out the reaction N-terminal L-cysteinyl-[protein] + acetyl-CoA = N-terminal N(alpha)-acetyl-L-cysteinyl-[protein] + CoA + H(+). It catalyses the reaction N-terminal L-threonyl-[protein] + acetyl-CoA = N-terminal N(alpha)-acetyl-L-threonyl-[protein] + CoA + H(+). Displays alpha (N-terminal) acetyltransferase activity. Proposed alternative catalytic subunit of the N-terminal acetyltransferase A (NatA) complex. The chain is N-alpha-acetyltransferase 11 (Naa11) from Mus musculus (Mouse).